The sequence spans 317 residues: Acetyl-coenzyme A carboxylase carboxyl transferase subunit alpha (317 aa).

The CoA carboxyltransferase C-terminal domain maps to 38–292 (TLEERLARLE…DNIIKQSLVE (255 aa)).

Belongs to the AccA family. In terms of assembly, acetyl-CoA carboxylase is a heterohexamer composed of biotin carboxyl carrier protein (AccB), biotin carboxylase (AccC) and two subunits each of ACCase subunit alpha (AccA) and ACCase subunit beta (AccD).

It is found in the cytoplasm. It catalyses the reaction N(6)-carboxybiotinyl-L-lysyl-[protein] + acetyl-CoA = N(6)-biotinyl-L-lysyl-[protein] + malonyl-CoA. Its pathway is lipid metabolism; malonyl-CoA biosynthesis; malonyl-CoA from acetyl-CoA: step 1/1. Its function is as follows. Component of the acetyl coenzyme A carboxylase (ACC) complex. First, biotin carboxylase catalyzes the carboxylation of biotin on its carrier protein (BCCP) and then the CO(2) group is transferred by the carboxyltransferase to acetyl-CoA to form malonyl-CoA. This chain is Acetyl-coenzyme A carboxylase carboxyl transferase subunit alpha, found in Oceanobacillus iheyensis (strain DSM 14371 / CIP 107618 / JCM 11309 / KCTC 3954 / HTE831).